Consider the following 319-residue polypeptide: Ninja-family protein AFP4 (319 aa).

Positions 39–54 (DSEHGENQQEAKKRED) are enriched in basic and acidic residues. 3 disordered regions span residues 39 to 63 (DSEH…EKDV), 99 to 120 (FVFD…IVGR), and 205 to 228 (VTGP…NVEN).

It belongs to the Ninja family. Interacts with ABI5/DPBF1, AREB3/DPBF3, EEL/DPBF4, ABF1 and ABF3/DPBF5. In terms of tissue distribution, predominantly expressed in roots and seedlings.

The protein localises to the nucleus. Functionally, acts as a negative regulator of abscisic acid (ABA) and salinity responses. The chain is Ninja-family protein AFP4 (AFP4) from Arabidopsis thaliana (Mouse-ear cress).